A 105-amino-acid chain; its full sequence is UPF0145 protein OEOE_0637 (105 aa).

Belongs to the UPF0145 family.

This Oenococcus oeni (strain ATCC BAA-331 / PSU-1) protein is UPF0145 protein OEOE_0637.